Reading from the N-terminus, the 156-residue chain is Small ribosomal subunit protein uS7 (156 aa).

Belongs to the universal ribosomal protein uS7 family. In terms of assembly, part of the 30S ribosomal subunit. Contacts proteins S9 and S11.

One of the primary rRNA binding proteins, it binds directly to 16S rRNA where it nucleates assembly of the head domain of the 30S subunit. Is located at the subunit interface close to the decoding center, probably blocks exit of the E-site tRNA. The chain is Small ribosomal subunit protein uS7 from Glaesserella parasuis serovar 5 (strain SH0165) (Haemophilus parasuis).